Here is a 357-residue protein sequence, read N- to C-terminus: Scopoletin 8-hydroxylase (357 aa).

In terms of domain architecture, Fe2OG dioxygenase spans 206-307; it reads MGTKMVNMNY…RVSVPIFTAP (102 aa). Position 216 (Tyr-216) interacts with 2-oxoglutarate. 3 residues coordinate Fe cation: His-231, Asp-233, and His-288. 2-oxoglutarate contacts are provided by Arg-298 and Ser-300.

This sequence belongs to the iron/ascorbate-dependent oxidoreductase family. It depends on L-ascorbate as a cofactor. Requires Fe(2+) as cofactor. In terms of tissue distribution, expressed in both primary and lateral roots under iron-deficient conditions, except in apical root zones, and mostly in the root epidermal layer.

The catalysed reaction is scopoletin + 2-oxoglutarate + O2 = fraxetin + succinate + CO2. It functions in the pathway phenylpropanoid metabolism. Functionally, involved in the pathway of sideretin biosynthesis from feruloyl CoA, a redox-active catecholic metabolite exuded by roots in response to iron deficiency in order to facilitate the uptake of iron; this pathway consists in the successive conversion from feruloyl CoA to scopoletin, from scopoletin to fraxetin and from fraxetin to sideretin. Catalyzes the biosynthesis of fraxetin via scopoletin hydroxylation. The polypeptide is Scopoletin 8-hydroxylase (Arabidopsis thaliana (Mouse-ear cress)).